The primary structure comprises 543 residues: Capsid vertex component 2 (543 aa).

The interaction with major capsid protein/MCP stretch occupies residues 1-54 (MWKLEKKYILRQNPSVFLNGTAFWTPHPQNILHIDRNSLRETKKNASLYRTRLL). The tract at residues 101-120 (SPQLLPSPPKPLSPTTQSQP) is disordered.

It belongs to the herpesviridae CVC2 protein family. As to quaternary structure, heterodimerizes with CVC1. Interacts with major capsid protein/MCP and triplex capsid protein 1/TRX1 at the pentamer vertices. Interacts with the large tegument protein/LTP.

Its subcellular location is the virion. It localises to the host nucleus. Capsid vertex-specific component that plays a role during viral DNA encapsidation, assuring correct genome cleavage and presumably stabilizing capsids that contain full-length viral genomes. Participates in the interaction between the capsid and the tegument through interaction with the large tegument protein/LTP. This chain is Capsid vertex component 2, found in Saimiri sciureus (Common squirrel monkey).